Reading from the N-terminus, the 360-residue chain is Peptide chain release factor 1 (360 aa).

Glutamine 235 is subject to N5-methylglutamine. Positions 284-312 (AKRQQAEASTRRNLLGSGDRSDRNRTYNF) are disordered.

The protein belongs to the prokaryotic/mitochondrial release factor family. In terms of processing, methylated by PrmC. Methylation increases the termination efficiency of RF1.

The protein resides in the cytoplasm. In terms of biological role, peptide chain release factor 1 directs the termination of translation in response to the peptide chain termination codons UAG and UAA. The protein is Peptide chain release factor 1 of Escherichia coli O81 (strain ED1a).